The primary structure comprises 291 residues: Bifunctional protein FolD (291 aa).

NADP(+) contacts are provided by residues 165-167, serine 190, and isoleucine 231; that span reads GRS.

Belongs to the tetrahydrofolate dehydrogenase/cyclohydrolase family. As to quaternary structure, homodimer.

It catalyses the reaction (6R)-5,10-methylene-5,6,7,8-tetrahydrofolate + NADP(+) = (6R)-5,10-methenyltetrahydrofolate + NADPH. The enzyme catalyses (6R)-5,10-methenyltetrahydrofolate + H2O = (6R)-10-formyltetrahydrofolate + H(+). The protein operates within one-carbon metabolism; tetrahydrofolate interconversion. In terms of biological role, catalyzes the oxidation of 5,10-methylenetetrahydrofolate to 5,10-methenyltetrahydrofolate and then the hydrolysis of 5,10-methenyltetrahydrofolate to 10-formyltetrahydrofolate. This is Bifunctional protein FolD from Azoarcus sp. (strain BH72).